Consider the following 192-residue polypeptide: Ribosomal RNA small subunit methyltransferase G (192 aa).

S-adenosyl-L-methionine is bound by residues Gly-63, Leu-68, 112 to 113 (IE), and Arg-125.

Belongs to the methyltransferase superfamily. RNA methyltransferase RsmG family.

Its subcellular location is the cytoplasm. It catalyses the reaction guanosine(527) in 16S rRNA + S-adenosyl-L-methionine = N(7)-methylguanosine(527) in 16S rRNA + S-adenosyl-L-homocysteine. Functionally, specifically methylates the N7 position of guanine in position 527 of 16S rRNA. The chain is Ribosomal RNA small subunit methyltransferase G from Rickettsia rickettsii (strain Iowa).